The chain runs to 115 residues: Mobilization protein MbeC (115 aa).

It to E.coli MbaC and MbkC. Homodimer. Interacts with MbeA and MbeB to form the relaxosome.

Its function is as follows. Required for efficient mobilization of ColE1 plasmid and is thus essential to promote the specific transfer of the plasmid during conjugation. Probably functions by inducing DNA bending, helping the MbeA relaxase to melt the DNA around the nic site and cleave the phosphodiester bond. Binds specifically double-stranded DNA (dsDNA) containing the ColE1 oriT but does not recognize the inverted repeat (IR). This is Mobilization protein MbeC (mbeC) from Escherichia coli.